A 253-amino-acid polypeptide reads, in one-letter code: Vitamin B12 import ATP-binding protein BtuD (253 aa).

One can recognise an ABC transporter domain in the interval Met-1 to Asp-236. Gly-34–Ser-41 is an ATP binding site.

It belongs to the ABC transporter superfamily. Vitamin B12 importer (TC 3.A.1.13.1) family. As to quaternary structure, the complex is composed of two ATP-binding proteins (BtuD), two transmembrane proteins (BtuC) and a solute-binding protein (BtuF).

Its subcellular location is the cell inner membrane. The catalysed reaction is an R-cob(III)alamin(out) + ATP + H2O = an R-cob(III)alamin(in) + ADP + phosphate + H(+). Part of the ABC transporter complex BtuCDF involved in vitamin B12 import. Responsible for energy coupling to the transport system. The sequence is that of Vitamin B12 import ATP-binding protein BtuD from Photorhabdus laumondii subsp. laumondii (strain DSM 15139 / CIP 105565 / TT01) (Photorhabdus luminescens subsp. laumondii).